The sequence spans 155 residues: MANAVLVVRIKGQADCPYWASTTMDLLKLERKYRAVILPAKDNLLGMLKKVQHYVAWVDLDTELAQELIDKKARKSGYKKVTPEDLKELGYASSAELAAALTEGKTMLSKLKPLKPWFALAPPRHGFKRSTKRLYGQKGILGRNKELATIVRNMI.

Belongs to the universal ribosomal protein uL30 family. As to quaternary structure, part of the 50S ribosomal subunit.

The sequence is that of Large ribosomal subunit protein uL30 from Nitrosopumilus maritimus (strain SCM1).